A 105-amino-acid chain; its full sequence is Cysteine-rich venom protein VAR2 (105 aa).

Residues 1 to 22 form the signal peptide; that stretch reads MILLKLYLTLAAILCQSRGTTS.

This sequence belongs to the CRISP family. Post-translationally, contains 8 disulfide bonds. As to expression, expressed by the venom gland.

Its subcellular location is the secreted. Blocks ryanodine receptors, and potassium channels. This is Cysteine-rich venom protein VAR2 from Varanus acanthurus (Ridge-tailed monitor).